The following is a 587-amino-acid chain: Prolycopene isomerase 2, chloroplastic (587 aa).

Residues 1–50 (MLCLSLNSSSTSPPKLPLHHSFSRRGIRSWVRSPCVQRKKLGFWSSPKAV) constitute a chloroplast transit peptide.

The protein belongs to the carotenoid/retinoid oxidoreductase family. CrtISO subfamily. Requires NAD(+) as cofactor. NADP(+) serves as cofactor. It depends on FAD as a cofactor. Up-regulated in the flower buds and flower lip tissue, while it is weakly expressed in leaves.

Its subcellular location is the plastid. It localises to the chloroplast membrane. The catalysed reaction is 7,7',9,9'-tetra-cis-lycopene = all-trans-lycopene. It functions in the pathway carotenoid biosynthesis; lycopene biosynthesis. Carotene cis-trans-isomerase that converts 7,9,9'-tri-cis-neurosporene to 9'-cis-neurosporene and 7,9,9',7'-tetra-cis-lycopene (also known as prolycopene) into all-trans-lycopene. Isomerization requires redox-active components, suggesting that isomerization is achieved by a reversible redox reaction acting at specific double bonds. Isomerizes adjacent cis-double bonds at C7 and C9 pairwise into the trans-configuration, but is incapable of isomerizing single cis-double bonds at C9 and C9'. The polypeptide is Prolycopene isomerase 2, chloroplastic (CRTISO2) (Oncidium hybrid cultivar (Orchid)).